The chain runs to 62 residues: Large ribosomal subunit protein uL30 (62 aa).

Belongs to the universal ribosomal protein uL30 family. As to quaternary structure, part of the 50S ribosomal subunit.

The protein is Large ribosomal subunit protein uL30 of Shouchella clausii (strain KSM-K16) (Alkalihalobacillus clausii).